Here is a 168-residue protein sequence, read N- to C-terminus: Transcriptional regulator MraZ (168 aa).

SpoVT-AbrB domains lie at 8–51 (EYNQ…GGDR) and 90–140 (ALNM…KADI).

This sequence belongs to the MraZ family. In terms of assembly, forms oligomers.

Its subcellular location is the cytoplasm. The protein resides in the nucleoid. This chain is Transcriptional regulator MraZ, found in Cereibacter sphaeroides (strain KD131 / KCTC 12085) (Rhodobacter sphaeroides).